The sequence spans 163 residues: Ribosome maturation factor RimM (163 aa).

The PRC barrel domain occupies 92 to 161 (PGEYYHHDLI…AETVTVNAAF (70 aa)).

This sequence belongs to the RimM family. Binds ribosomal protein uS19.

It is found in the cytoplasm. Functionally, an accessory protein needed during the final step in the assembly of 30S ribosomal subunit, possibly for assembly of the head region. Essential for efficient processing of 16S rRNA. May be needed both before and after RbfA during the maturation of 16S rRNA. It has affinity for free ribosomal 30S subunits but not for 70S ribosomes. This Sphingopyxis alaskensis (strain DSM 13593 / LMG 18877 / RB2256) (Sphingomonas alaskensis) protein is Ribosome maturation factor RimM.